We begin with the raw amino-acid sequence, 413 residues long: Phosphopentomutase (413 aa).

Positions 11, 306, 311, 347, 348, and 359 each coordinate Mn(2+).

Belongs to the phosphopentomutase family. It depends on Mn(2+) as a cofactor.

It localises to the cytoplasm. It catalyses the reaction 2-deoxy-alpha-D-ribose 1-phosphate = 2-deoxy-D-ribose 5-phosphate. The enzyme catalyses alpha-D-ribose 1-phosphate = D-ribose 5-phosphate. The protein operates within carbohydrate degradation; 2-deoxy-D-ribose 1-phosphate degradation; D-glyceraldehyde 3-phosphate and acetaldehyde from 2-deoxy-alpha-D-ribose 1-phosphate: step 1/2. In terms of biological role, isomerase that catalyzes the conversion of deoxy-ribose 1-phosphate (dRib-1-P) and ribose 1-phosphate (Rib-1-P) to deoxy-ribose 5-phosphate (dRib-5-P) and ribose 5-phosphate (Rib-5-P), respectively. The sequence is that of Phosphopentomutase from Helicobacter pylori (strain Shi470).